We begin with the raw amino-acid sequence, 149 residues long: Sperm surface protein Sp17 (149 aa).

Residues Cys83–Thr96 show a composition bias toward basic and acidic residues. Positions Cys83–Ala114 are disordered. The segment covering Glu103–Glu113 has biased composition (acidic residues). The IQ domain maps to Glu112–Glu141.

Homodimer. May interact with ROPN1. In terms of tissue distribution, testis- and sperm-specific.

Its subcellular location is the membrane. Its function is as follows. Sperm surface zona pellucida binding protein. Helps to bind spermatozoa to the zona pellucida with high affinity. Might function in binding zona pellucida and carbohydrates. The sequence is that of Sperm surface protein Sp17 (Spa17) from Mus musculus (Mouse).